The primary structure comprises 355 residues: Protein RecA (355 aa).

An ATP-binding site is contributed by 67 to 74 (GPESSGKT).

Belongs to the RecA family.

The protein localises to the cytoplasm. Its function is as follows. Can catalyze the hydrolysis of ATP in the presence of single-stranded DNA, the ATP-dependent uptake of single-stranded DNA by duplex DNA, and the ATP-dependent hybridization of homologous single-stranded DNAs. It interacts with LexA causing its activation and leading to its autocatalytic cleavage. The chain is Protein RecA from Shewanella halifaxensis (strain HAW-EB4).